The chain runs to 69 residues: NAD(P)H-quinone oxidoreductase subunit O (69 aa).

Belongs to the complex I NdhO subunit family. NDH-1 can be composed of about 15 different subunits; different subcomplexes with different compositions have been identified which probably have different functions.

The protein localises to the cellular thylakoid membrane. It catalyses the reaction a plastoquinone + NADH + (n+1) H(+)(in) = a plastoquinol + NAD(+) + n H(+)(out). It carries out the reaction a plastoquinone + NADPH + (n+1) H(+)(in) = a plastoquinol + NADP(+) + n H(+)(out). Its function is as follows. NDH-1 shuttles electrons from an unknown electron donor, via FMN and iron-sulfur (Fe-S) centers, to quinones in the respiratory and/or the photosynthetic chain. The immediate electron acceptor for the enzyme in this species is believed to be plastoquinone. Couples the redox reaction to proton translocation, and thus conserves the redox energy in a proton gradient. Cyanobacterial NDH-1 also plays a role in inorganic carbon-concentration. The polypeptide is NAD(P)H-quinone oxidoreductase subunit O (Acaryochloris marina (strain MBIC 11017)).